Reading from the N-terminus, the 246-residue chain is Probable transcriptional regulatory protein Dole_0371 (246 aa).

Belongs to the TACO1 family.

The protein localises to the cytoplasm. This chain is Probable transcriptional regulatory protein Dole_0371, found in Desulfosudis oleivorans (strain DSM 6200 / JCM 39069 / Hxd3) (Desulfococcus oleovorans).